A 335-amino-acid polypeptide reads, in one-letter code: Holliday junction branch migration complex subunit RuvB (335 aa).

The segment at 1–183 (MDERIISSET…FGVIDHLEFY (183 aa)) is large ATPase domain (RuvB-L). ATP is bound by residues Leu22, Arg23, Gly64, Lys67, Thr68, Thr69, 130 to 132 (EDY), Arg173, Tyr183, and Arg220. Mg(2+) is bound at residue Thr68. The small ATPAse domain (RuvB-S) stretch occupies residues 184–254 (TEEQLTEIVL…LAKEALTLLQ (71 aa)). The interval 257 to 335 (PRGLDTIDQK…HLGISYEKEV (79 aa)) is head domain (RuvB-H). 3 residues coordinate DNA: Arg293, Arg312, and Arg317.

It belongs to the RuvB family. In terms of assembly, homohexamer. Forms an RuvA(8)-RuvB(12)-Holliday junction (HJ) complex. HJ DNA is sandwiched between 2 RuvA tetramers; dsDNA enters through RuvA and exits via RuvB. An RuvB hexamer assembles on each DNA strand where it exits the tetramer. Each RuvB hexamer is contacted by two RuvA subunits (via domain III) on 2 adjacent RuvB subunits; this complex drives branch migration. In the full resolvosome a probable DNA-RuvA(4)-RuvB(12)-RuvC(2) complex forms which resolves the HJ.

The protein resides in the cytoplasm. The enzyme catalyses ATP + H2O = ADP + phosphate + H(+). The RuvA-RuvB-RuvC complex processes Holliday junction (HJ) DNA during genetic recombination and DNA repair, while the RuvA-RuvB complex plays an important role in the rescue of blocked DNA replication forks via replication fork reversal (RFR). RuvA specifically binds to HJ cruciform DNA, conferring on it an open structure. The RuvB hexamer acts as an ATP-dependent pump, pulling dsDNA into and through the RuvAB complex. RuvB forms 2 homohexamers on either side of HJ DNA bound by 1 or 2 RuvA tetramers; 4 subunits per hexamer contact DNA at a time. Coordinated motions by a converter formed by DNA-disengaged RuvB subunits stimulates ATP hydrolysis and nucleotide exchange. Immobilization of the converter enables RuvB to convert the ATP-contained energy into a lever motion, pulling 2 nucleotides of DNA out of the RuvA tetramer per ATP hydrolyzed, thus driving DNA branch migration. The RuvB motors rotate together with the DNA substrate, which together with the progressing nucleotide cycle form the mechanistic basis for DNA recombination by continuous HJ branch migration. Branch migration allows RuvC to scan DNA until it finds its consensus sequence, where it cleaves and resolves cruciform DNA. This is Holliday junction branch migration complex subunit RuvB from Listeria monocytogenes serotype 4a (strain HCC23).